A 699-amino-acid polypeptide reads, in one-letter code: Auxin response factor 1 (699 aa).

The segment at residues 122 to 224 (FCKILTPSDT…EQRVGVRRLV (103 aa)) is a DNA-binding region (TF-B3). Disordered stretches follow at residues 539–565 (TTTD…DSGQ) and 680–699 (EPHP…KTGF). Residues 595 to 684 (RTRIKVQMHG…DEKKIEPHPK (90 aa)) enclose the PB1 domain. Polar residues predominate over residues 687–699 (SSANPEQDQKTGF).

This sequence belongs to the ARF family. Homodimers and heterodimers. As to expression, expressed in roots, culms, leaves and young panicles.

It localises to the nucleus. Auxin response factors (ARFs) are transcriptional factors that bind specifically to the DNA sequence 5'-TGTCTC-3' found in the auxin-responsive promoter elements (AuxREs). This chain is Auxin response factor 1 (ARF1), found in Oryza sativa subsp. japonica (Rice).